Consider the following 110-residue polypeptide: UPF0122 protein BPUM_1495 (110 aa).

Belongs to the UPF0122 family.

In terms of biological role, might take part in the signal recognition particle (SRP) pathway. This is inferred from the conservation of its genetic proximity to ftsY/ffh. May be a regulatory protein. The chain is UPF0122 protein BPUM_1495 from Bacillus pumilus (strain SAFR-032).